Consider the following 183-residue polypeptide: Ribosome-recycling factor (183 aa).

It belongs to the RRF family.

Its subcellular location is the cytoplasm. In terms of biological role, responsible for the release of ribosomes from messenger RNA at the termination of protein biosynthesis. May increase the efficiency of translation by recycling ribosomes from one round of translation to another. The sequence is that of Ribosome-recycling factor from Afipia carboxidovorans (strain ATCC 49405 / DSM 1227 / KCTC 32145 / OM5) (Oligotropha carboxidovorans).